A 530-amino-acid polypeptide reads, in one-letter code: MLASTFSYRMYKTALILAALLGSGQAQQVGTSQAEVHPSMTWQSCTAGGSCTTNNGKVVIDANWRWVHKVGDYTNCYTGNTWDKTLCPDDATCASNCALEGANYQSTYGATTSGDSLRLNFVTTSQQKNIGSRLYMMKDDTTYEMFKLLNQEFTFDVDVSNLPCGLNGALYFVAMDADGGMSKYPTNKAGAKYGTGYCDSQCPRDLKFINGQANVEGWQPSSNDANAGTGNHGSCCAEMDIWEANSISTAFTPHPCDTPGQVMCTGDACGGTYSSDRYGGTCDPDGCDFNSFRQGNKTFYGPGMTVDTKSKFTVVTQFITDDGTASGTLKEIKRFYVQNGKVIPNSESTWSGVGGNSITNDYCTAQKSLFKDQNVFAKHGGMEGMGAALAQGMVLVMSLWDDHAANMLWLDSNYPTTASSSTPGVARGTCDISSGVPADVEANHPDASVVYSNIKVGPIGSTFNSGGSNPGGGTTTTAKPTTTTTTAGSPGGTGVAQHYGQCGGNGWQGPTTCASPYTCQKLNDFYSQCL.

Positions 1–26 are cleaved as a signal peptide; that stretch reads MLASTFSYRMYKTALILAALLGSGQA. Positions 27-461 are catalytic; the sequence is QQVGTSQAEV…SNIKVGPIGS (435 aa). E238 serves as the catalytic Nucleophile. The active-site Proton donor is E243. N296 is a glycosylation site (N-linked (GlcNAc...) asparagine). Residues 462 to 492 form a disordered region; sequence TFNSGGSNPGGGTTTTAKPTTTTTTAGSPGG. The interval 462–494 is ser/Thr-rich linker; that stretch reads TFNSGGSNPGGGTTTTAKPTTTTTTAGSPGGTG. A compositionally biased stretch (low complexity) spans 475–488; it reads TTTAKPTTTTTTAG. The CBM1 domain maps to 494 to 530; that stretch reads GVAQHYGQCGGNGWQGPTTCASPYTCQKLNDFYSQCL. Disulfide bonds link C502–C519 and C513–C529.

It belongs to the glycosyl hydrolase 7 (cellulase C) family.

Its subcellular location is the secreted. It catalyses the reaction Hydrolysis of (1-&gt;4)-beta-D-glucosidic linkages in cellulose and cellotetraose, releasing cellobiose from the non-reducing ends of the chains.. The biological conversion of cellulose to glucose generally requires three types of hydrolytic enzymes: (1) Endoglucanases which cut internal beta-1,4-glucosidic bonds; (2) Exocellobiohydrolases that cut the disaccharide cellobiose from the non-reducing end of the cellulose polymer chain; (3) Beta-1,4-glucosidases which hydrolyze the cellobiose and other short cello-oligosaccharides to glucose. This Neosartorya fischeri (strain ATCC 1020 / DSM 3700 / CBS 544.65 / FGSC A1164 / JCM 1740 / NRRL 181 / WB 181) (Aspergillus fischerianus) protein is Probable 1,4-beta-D-glucan cellobiohydrolase B (cbhB).